Consider the following 379-residue polypeptide: Oxidized polyvinyl alcohol hydrolase (379 aa).

The N-terminal stretch at 1–23 (MNQSLGVLRLTRGVIALALASVA) is a signal peptide. Residues S203 and S309 each act as charge relay system in the active site.

Belongs to the peptidase S9A family. Monomer.

The enzyme catalyses nonane-4,6-dione + H2O = pentan-2-one + butanoate + H(+). Its function is as follows. Catalyzes the hydrolysis of 4,6-nonanedione, a beta-diketone compound. Also mediates hydrolysis of oxidized polyvinyl alcohol (PVA) in the second step in the degradation of polyvinyl alcohol. Not active toward the monoketone structure. The polypeptide is Oxidized polyvinyl alcohol hydrolase (pvaB) (Pseudomonas sp).